Here is a 286-residue protein sequence, read N- to C-terminus: Sulfur carrier protein FdhD (286 aa).

Residue Cys-110 is the Cysteine persulfide intermediate of the active site. Residue 247–252 (FARGEK) participates in Mo-bis(molybdopterin guanine dinucleotide) binding.

This sequence belongs to the FdhD family.

Its subcellular location is the cytoplasm. In terms of biological role, required for formate dehydrogenase (FDH) activity. Acts as a sulfur carrier protein that transfers sulfur from IscS to the molybdenum cofactor prior to its insertion into FDH. The sequence is that of Sulfur carrier protein FdhD from Wolinella succinogenes (strain ATCC 29543 / DSM 1740 / CCUG 13145 / JCM 31913 / LMG 7466 / NCTC 11488 / FDC 602W) (Vibrio succinogenes).